A 547-amino-acid chain; its full sequence is Cilia- and flagella- associated protein 210 (547 aa).

A coiled-coil region spans residues 184–254 (KLNVEKAFKE…EIEMKKKQGK (71 aa)). Residues 210-237 (KDHLKQIKEHEEEEERRRKEEEKDAEEI) form a disordered region.

Microtubule inner protein component of sperm flagellar doublet microtubules. Expressed in trachea multiciliated cells.

Its subcellular location is the cytoplasm. The protein resides in the cytoskeleton. It localises to the cilium axoneme. The protein localises to the flagellum axoneme. Functionally, microtubule inner protein (MIP) part of the dynein-decorated doublet microtubules (DMTs) in cilia axoneme, which is required for motile cilia beating. This is Cilia- and flagella- associated protein 210 (CFAP210) from Bos taurus (Bovine).